The following is a 361-amino-acid chain: MIVRKNMGRAKSLLMLLMVLGFFFATYNLVSMIMDHRAGNWVADGLESFDRKMLGSASTNAKYHVALTATDAAYSQWQCRIMYYWYKKVKDMPGSNMGKFTRILHSGRTDQLMDEIPTFVVDPLPEGLDRGYIVLNRPWAFVQWLEKADIEEEYILMAEPDHIFVNPLPNLASRTQPAGYPFFYIKPAENEKIIRKFYPKDKGPVTDVDPIGNSPVIIQKSLIEEIAPTWVNVSLRMKDDPETDKAFGWVLEMYAYAVASALHGVKHILRKDFMLQPPWDRHVGKTFIIHYTYGCDYNLKGELTYGKIGEWRFDKRSYLMGPPPKNLSLPPPGVPESVVRLVKMVNEATANIPEWDSLNRS.

The helical; Signal-anchor transmembrane segment at 13–33 threads the bilayer; it reads LLMLLMVLGFFFATYNLVSMI.

The protein localises to the golgi apparatus membrane. It catalyses the reaction trans-4-hydroxy-L-prolyl-[protein] + UDP-beta-L-arabinofuranose = O-(beta-L-arabinofuranosyl)-trans-4-hydroxy-L-prolyl-[protein] + UDP + H(+). Its function is as follows. Glycosyltransferase involved in the O-arabinosylation of several proteins including extensins and small signaling peptides. Catalyzes the transfer of the initial L-arabinose to the hydroxyl group of Hyp residues. Probably involved in the arabinosylation of CLAVATA3/ESR-related (CLE) signaling peptides that move from root to shoot, to interact with receptor kinase signaling that regulates nodulation. Involved in long distance nodulation signaling events. Involved in the autoregulation of nodulation (AON), a long distance systemic signaling from root to shoot and back again, which allows legumes to limit the number of root nodules formed based on available nitrogen and previous rhizobial colonization. In Lotus japonicus (Lotus corniculatus var. japonicus), this protein is Hydroxyproline O-arabinosyltransferase PLENTY.